The chain runs to 659 residues: Threonine--tRNA ligase (659 aa).

The TGS domain maps to 3-64 (EKIRITLIDN…LEDGRLEIIT (62 aa)). Residues 249–555 (DHRRLGQEMD…LIEHHAGRFP (307 aa)) form a catalytic region. Residues C354, H405, and H532 each contribute to the Zn(2+) site.

The protein belongs to the class-II aminoacyl-tRNA synthetase family. Homodimer. Zn(2+) is required as a cofactor.

The protein resides in the cytoplasm. The enzyme catalyses tRNA(Thr) + L-threonine + ATP = L-threonyl-tRNA(Thr) + AMP + diphosphate + H(+). Catalyzes the attachment of threonine to tRNA(Thr) in a two-step reaction: L-threonine is first activated by ATP to form Thr-AMP and then transferred to the acceptor end of tRNA(Thr). Also edits incorrectly charged L-seryl-tRNA(Thr). The chain is Threonine--tRNA ligase from Zymomonas mobilis subsp. mobilis (strain ATCC 31821 / ZM4 / CP4).